The primary structure comprises 366 residues: Growth hormone secretagogue receptor type 1 (366 aa).

Residues 1 to 40 (MWNATPSEEPGSNLTRAELGWDAPPGNDSLADELLQLFPA) lie on the Extracellular side of the membrane. 2 N-linked (GlcNAc...) asparagine glycosylation sites follow: Asn13 and Asn27. The helical transmembrane segment at 41-66 (PLLAGVTATCVALFVVGIAGNLLTML) threads the bilayer. Topologically, residues 67–72 (VVSRFR) are cytoplasmic. Residues 73 to 96 (ELRTTTNLYLSSMAFSDLLIFLCM) traverse the membrane as a helical segment. At 97–117 (PLDLVRLWQYRPWNFGDLLCK) the chain is on the extracellular side. A disulfide bridge links Cys116 with Cys198. Residues 118 to 139 (LFQFVSESCTYATVLTITALSV) form a helical membrane-spanning segment. Over 140 to 162 (ERYFAICFPLRAKVVVTKGRVKL) the chain is Cytoplasmic. The chain crosses the membrane as a helical span at residues 163 to 183 (VILVIWALAFCSAGPIFVLVG). Residues 184-211 (VEHENGTDPQDTNECRATEFAVRSGLLT) are Extracellular-facing. N-linked (GlcNAc...) asparagine glycosylation occurs at Asn188. The chain crosses the membrane as a helical span at residues 212–235 (IMVWVSSVFFFLPVFCLTVLYSLI). The Cytoplasmic segment spans residues 236–263 (GRKLWRRKRGDGAVGSSLRDQNHRQTVK). The chain crosses the membrane as a helical span at residues 264–285 (MLAVVVFAFILCWLPFHVGRYL). Residues 286-302 (FSKSFEPGSLEIAQISQ) are Extracellular-facing. Residues 303 to 326 (YCNLVSFVLFYLSAAINPILYNIM) form a helical membrane-spanning segment. Over 327–366 (SKKYRVAVFKLLGFEPFSQRKLSTLKDESSRAWTKSSINT) the chain is Cytoplasmic.

This sequence belongs to the G-protein coupled receptor 1 family.

It is found in the cell membrane. Its function is as follows. Receptor for ghrelin, coupled to G-alpha-11 proteins. Stimulates growth hormone secretion. Also binds other growth hormone releasing peptides (GHRP) (e.g. Met-enkephalin and GHRP-6) as well as non-peptide, low molecular weight secretagogues (e.g. L-692,429, MK-0677, adenosine). This chain is Growth hormone secretagogue receptor type 1 (GHSR), found in Oryctolagus cuniculus (Rabbit).